We begin with the raw amino-acid sequence, 324 residues long: Methenyltetrahydromethanopterin cyclohydrolase (324 aa).

Belongs to the MCH family.

The protein localises to the cytoplasm. The catalysed reaction is 5,10-methenyl-5,6,7,8-tetrahydromethanopterin + H2O = N(5)-formyl-5,6,7,8-tetrahydromethanopterin + H(+). The protein operates within one-carbon metabolism; methanogenesis from CO(2); 5,10-methenyl-5,6,7,8-tetrahydromethanopterin from CO(2): step 3/3. In terms of biological role, catalyzes the reversible interconversion of 5-formyl-H(4)MPT to methenyl-H(4)MPT(+). The chain is Methenyltetrahydromethanopterin cyclohydrolase from Methanococcus aeolicus (strain ATCC BAA-1280 / DSM 17508 / OCM 812 / Nankai-3).